Here is a 695-residue protein sequence, read N- to C-terminus: Polyribonucleotide nucleotidyltransferase (695 aa).

2 residues coordinate Mg(2+): aspartate 488 and aspartate 494. One can recognise a KH domain in the interval 554–613 (PKTAVIKIQTDKIRDLIGKGGETIKGIISTSSASVDVDDNGNVNIFSNDQKSFDTAMQMV). Residues 623–690 (GKVYTGKVVK…DRGRIKLSRK (68 aa)) enclose the S1 motif domain.

The protein belongs to the polyribonucleotide nucleotidyltransferase family. In terms of assembly, component of the RNA degradosome, which is a multiprotein complex involved in RNA processing and mRNA degradation. The cofactor is Mg(2+).

It localises to the cytoplasm. The catalysed reaction is RNA(n+1) + phosphate = RNA(n) + a ribonucleoside 5'-diphosphate. Functionally, involved in mRNA degradation. Catalyzes the phosphorolysis of single-stranded polyribonucleotides processively in the 3'- to 5'-direction. The chain is Polyribonucleotide nucleotidyltransferase from Ruthia magnifica subsp. Calyptogena magnifica.